Consider the following 294-residue polypeptide: Osteopontin (294 aa).

An N-terminal signal peptide occupies residues 1–16 (MRLAVICFCLFGIASS). 13 positions are modified to phosphoserine: serine 24, serine 26, serine 27, serine 61, serine 62, serine 75, serine 77, serine 80, serine 106, serine 109, serine 112, serine 115, and serine 118. A disordered region spans residues 42–274 (WLVPDPSQKQ…LVLDPKSKED (233 aa)). Polar residues predominate over residues 48–61 (SQKQNLLAPQNAVS). Acidic residues predominate over residues 85-110 (DDDDDDDDDDGDHAESEDSVDSDESD). A compositionally biased stretch (polar residues) spans 121-130 (TVTASTQADT). Threonine 123, threonine 132, and threonine 137 each carry an O-linked (GalNAc...) threonine glycan. Positions 144–146 (RGD) match the Cell attachment site motif. A phosphothreonine mark is found at threonine 170 and threonine 175. The span at 174-187 (LTSHMKSGESKESL) shows a compositional bias: basic and acidic residues. Phosphoserine occurs at positions 176, 180, 200, 209, 213, and 219. Residues 197 to 216 (SMPSDQDNNGKGSHESSQLD) are compositionally biased toward polar residues. An O-linked (Xyl...) (chondroitin sulfate) serine glycan is attached at serine 219. Over residues 220–232 (LETHRLEHSKESQ) the composition is skewed to basic and acidic residues. Threonine 222 bears the Phosphothreonine mark. Phosphoserine is present on residues serine 228, serine 231, serine 234, serine 238, serine 243, serine 247, serine 250, serine 255, serine 260, serine 271, serine 283, serine 288, serine 290, and serine 291. Residues 234–249 (SADQSDVIDSQASSKA) are compositionally biased toward polar residues. Residues 263 to 274 (DKLVLDPKSKED) are compositionally biased toward basic and acidic residues. Serine 288 carries O-linked (Xyl...) (chondroitin sulfate) serine glycosylation.

This sequence belongs to the osteopontin family. As to quaternary structure, interacts (via N-terminus) with integrin ITGA9:ITGB1. Extensively phosphorylated by FAM20C in the extracellular medium at multiple sites within the S-x-E/pS motif. The phosphorylated form inhibits hydroxyapatite crystallization. Dephosphorylation via a mechanism involving ALPL/TNAP promotes hydroxyapatite crystallization. In terms of processing, O-glycosylated. Post-translationally, forms covalent cross-links mediated by transglutaminase TGM2, between a glutamine and the epsilon-amino group of a lysine residue, forming homopolymers and heteropolymers, increasing its collagen binding properties.

The protein resides in the secreted. Its function is as follows. Major non-collagenous bone protein that binds tightly to hydroxyapatite. Appears to form an integral part of the mineralized matrix. Probably important to cell-matrix interaction. Functionally, acts as a cytokine involved in enhancing production of interferon-gamma and interleukin-12 and reducing production of interleukin-10 and is essential in the pathway that leads to type I immunity. The chain is Osteopontin (Spp1) from Mus musculus (Mouse).